We begin with the raw amino-acid sequence, 209 residues long: Chaperone protein TorD (209 aa).

Belongs to the TorD/DmsD family. TorD subfamily.

The protein localises to the cytoplasm. In terms of biological role, involved in the biogenesis of TorA. Acts on TorA before the insertion of the molybdenum cofactor and, as a result, probably favors a conformation of the apoenzyme that is competent for acquiring the cofactor. This chain is Chaperone protein TorD, found in Shewanella baltica (strain OS155 / ATCC BAA-1091).